The primary structure comprises 251 residues: Small ribosomal subunit protein uS3 (251 aa).

Residues L22 to E93 form the KH type-2 domain. The tract at residues T223 to A251 is disordered. Residues E232–A251 show a composition bias toward acidic residues.

This sequence belongs to the universal ribosomal protein uS3 family. Component of the small ribosomal subunit. Mature ribosomes consist of a small (40S) and a large (60S) subunit. The 40S subunit contains about 32 different proteins and 1 molecule of RNA (18S). The 60S subunit contains 45 different proteins and 3 molecules of RNA (25S, 5.8S and 5S).

It is found in the cytoplasm. In terms of biological role, component of the ribosome, a large ribonucleoprotein complex responsible for the synthesis of proteins in the cell. The small ribosomal subunit (SSU) binds messenger RNAs (mRNAs) and translates the encoded message by selecting cognate aminoacyl-transfer RNA (tRNA) molecules. The large subunit (LSU) contains the ribosomal catalytic site termed the peptidyl transferase center (PTC), which catalyzes the formation of peptide bonds, thereby polymerizing the amino acids delivered by tRNAs into a polypeptide chain. The nascent polypeptides leave the ribosome through a tunnel in the LSU and interact with protein factors that function in enzymatic processing, targeting, and the membrane insertion of nascent chains at the exit of the ribosomal tunnel. The chain is Small ribosomal subunit protein uS3 (RPS3) from Candida albicans (strain SC5314 / ATCC MYA-2876) (Yeast).